A 432-amino-acid chain; its full sequence is Amino-acid acetyltransferase (432 aa).

The region spanning 286–425 (EQLREAGIED…ASLYNFQRNS (140 aa)) is the N-acetyltransferase domain.

Belongs to the acetyltransferase family. ArgA subfamily.

Its subcellular location is the cytoplasm. It carries out the reaction L-glutamate + acetyl-CoA = N-acetyl-L-glutamate + CoA + H(+). The protein operates within amino-acid biosynthesis; L-arginine biosynthesis; N(2)-acetyl-L-ornithine from L-glutamate: step 1/4. The polypeptide is Amino-acid acetyltransferase (Pseudomonas aeruginosa (strain LESB58)).